The sequence spans 868 residues: uncharacterized protein (868 aa).

It localises to the cytoplasm. The protein resides in the nucleus. This is an uncharacterized protein from Schizosaccharomyces pombe (strain 972 / ATCC 24843) (Fission yeast).